Reading from the N-terminus, the 196-residue chain is Hibernation-associated plasma protein HP-20 (196 aa).

The N-terminal stretch at 1–23 (MTDVWRLAIFVLMVNVLNDQVSC) is a signal peptide. The Collagen-like domain occupies 25-63 (GPPGPVGYPGVPGVPGPRGPPGQPGAAGRPGDPGPKGPS). The segment covering 28-47 (GPVGYPGVPGVPGPRGPPGQ) has biased composition (pro residues). A disordered region spans residues 28 to 64 (GPVGYPGVPGVPGPRGPPGQPGAAGRPGDPGPKGPSV). Residues 67-196 (PCRERSAFTV…IYFSGFLISS (130 aa)) enclose the C1q domain.

As to expression, plasma; synthesized in the liver.

It is found in the secreted. In terms of biological role, plasma proteins HP-20, HP-25, HP-27 and HP-55 form a 140 kDa complex via disulfide bonds in the plasma and are hibernation specific. The chain is Hibernation-associated plasma protein HP-20 from Tamias sibiricus (Siberian chipmunk).